A 255-amino-acid chain; its full sequence is Glutamate racemase (255 aa).

Substrate contacts are provided by residues 7-8 and 39-40; these read DS and YG. Cys70 serves as the catalytic Proton donor/acceptor. 71–72 lines the substrate pocket; sequence NT. The active-site Proton donor/acceptor is the Cys181. 182–183 serves as a coordination point for substrate; the sequence is TH.

It belongs to the aspartate/glutamate racemases family.

The catalysed reaction is L-glutamate = D-glutamate. It functions in the pathway cell wall biogenesis; peptidoglycan biosynthesis. Provides the (R)-glutamate required for cell wall biosynthesis. This chain is Glutamate racemase, found in Helicobacter pylori (strain ATCC 700392 / 26695) (Campylobacter pylori).